Consider the following 267-residue polypeptide: tRNA pseudouridine synthase A (267 aa).

The Nucleophile role is filled by Asp54. Tyr114 serves as a coordination point for substrate.

It belongs to the tRNA pseudouridine synthase TruA family. Homodimer.

The enzyme catalyses uridine(38/39/40) in tRNA = pseudouridine(38/39/40) in tRNA. Its function is as follows. Formation of pseudouridine at positions 38, 39 and 40 in the anticodon stem and loop of transfer RNAs. This Tropheryma whipplei (strain TW08/27) (Whipple's bacillus) protein is tRNA pseudouridine synthase A.